Reading from the N-terminus, the 303-residue chain is ATP synthase gamma chain (303 aa).

It belongs to the ATPase gamma chain family. In terms of assembly, F-type ATPases have 2 components, CF(1) - the catalytic core - and CF(0) - the membrane proton channel. CF(1) has five subunits: alpha(3), beta(3), gamma(1), delta(1), epsilon(1). CF(0) has three main subunits: a, b and c.

It localises to the cell membrane. Produces ATP from ADP in the presence of a proton gradient across the membrane. The gamma chain is believed to be important in regulating ATPase activity and the flow of protons through the CF(0) complex. The polypeptide is ATP synthase gamma chain (Nocardioides sp. (strain ATCC BAA-499 / JS614)).